Consider the following 90-residue polypeptide: uncharacterized protein (90 aa).

The helical transmembrane segment at 46 to 62 (MALLVVFLVSLFACTTI) threads the bilayer.

It localises to the membrane. This is an uncharacterized protein from Haemophilus influenzae (strain ATCC 51907 / DSM 11121 / KW20 / Rd).